We begin with the raw amino-acid sequence, 154 residues long: Transcriptional repressor NrdR (154 aa).

A zinc finger lies at 3-34 (CPFCGANDTKVIDSRLVAEGEQVRRRRECLAC). The 91-residue stretch at 49–139 (PRLIKQDGSR…VYRRFQDLNE (91 aa)) folds into the ATP-cone domain.

It belongs to the NrdR family. Zn(2+) serves as cofactor.

Its function is as follows. Negatively regulates transcription of bacterial ribonucleotide reductase nrd genes and operons by binding to NrdR-boxes. This Pseudomonas syringae pv. tomato (strain ATCC BAA-871 / DC3000) protein is Transcriptional repressor NrdR.